Reading from the N-terminus, the 455-residue chain is Ribulose bisphosphate carboxylase large chain (455 aa).

Lys-5 carries the post-translational modification N6,N6,N6-trimethyllysine. 2 residues coordinate substrate: Asn-114 and Thr-164. The active-site Proton acceptor is Lys-166. A substrate-binding site is contributed by Lys-168. Residues Lys-192, Asp-194, and Glu-195 each contribute to the Mg(2+) site. Lys-192 carries the post-translational modification N6-carboxylysine. Residue His-285 is the Proton acceptor of the active site. Residues Arg-286, His-318, and Ser-370 each coordinate substrate.

It belongs to the RuBisCO large chain family. Type I subfamily. In terms of assembly, heterohexadecamer of 8 large chains and 8 small chains; disulfide-linked. The disulfide link is formed within the large subunit homodimers. Mg(2+) is required as a cofactor. The disulfide bond which can form in the large chain dimeric partners within the hexadecamer appears to be associated with oxidative stress and protein turnover.

It localises to the plastid. The protein resides in the chloroplast. It carries out the reaction 2 (2R)-3-phosphoglycerate + 2 H(+) = D-ribulose 1,5-bisphosphate + CO2 + H2O. The catalysed reaction is D-ribulose 1,5-bisphosphate + O2 = 2-phosphoglycolate + (2R)-3-phosphoglycerate + 2 H(+). Functionally, ruBisCO catalyzes two reactions: the carboxylation of D-ribulose 1,5-bisphosphate, the primary event in carbon dioxide fixation, as well as the oxidative fragmentation of the pentose substrate in the photorespiration process. Both reactions occur simultaneously and in competition at the same active site. The polypeptide is Ribulose bisphosphate carboxylase large chain (Lupinus microcarpus var. densiflorus (Whitewhorl lupine)).